Reading from the N-terminus, the 548-residue chain is Fumarate hydratase class I, aerobic (548 aa).

The [4Fe-4S] cluster site is built by cysteine 105, cysteine 224, and cysteine 318.

It belongs to the class-I fumarase family. In terms of assembly, homodimer. It depends on [4Fe-4S] cluster as a cofactor.

The enzyme catalyses (S)-malate = fumarate + H2O. It carries out the reaction oxaloacetate = enol-oxaloacetate. It participates in carbohydrate metabolism; tricarboxylic acid cycle; (S)-malate from fumarate: step 1/1. Its function is as follows. Catalyzes the reversible hydration of fumarate to (S)-malate. Functions as an aerobic enzyme in the direction of malate formation as part of the citric acid cycle. Accounts for about 80% of the fumarase activity when the bacteria grow aerobically. To a lesser extent, also displays D-tartrate dehydratase activity in vitro, but is not able to convert (R)-malate, L-tartrate or meso-tartrate. Can also catalyze the isomerization of enol- to keto-oxaloacetate. The sequence is that of Fumarate hydratase class I, aerobic from Escherichia coli O6:H1 (strain CFT073 / ATCC 700928 / UPEC).